The primary structure comprises 274 residues: 3-methyl-2-oxobutanoate hydroxymethyltransferase (274 aa).

The Mg(2+) site is built by Asp-46 and Asp-85. 3-methyl-2-oxobutanoate-binding positions include 46-47 (DS), Asp-85, and Lys-114. Position 116 (Glu-116) interacts with Mg(2+). Glu-183 functions as the Proton acceptor in the catalytic mechanism.

It belongs to the PanB family. As to quaternary structure, homodecamer; pentamer of dimers. The cofactor is Mg(2+).

It is found in the cytoplasm. It carries out the reaction 3-methyl-2-oxobutanoate + (6R)-5,10-methylene-5,6,7,8-tetrahydrofolate + H2O = 2-dehydropantoate + (6S)-5,6,7,8-tetrahydrofolate. It participates in cofactor biosynthesis; coenzyme A biosynthesis. Its function is as follows. Catalyzes the reversible reaction in which hydroxymethyl group from 5,10-methylenetetrahydrofolate is transferred onto alpha-ketoisovalerate to form ketopantoate. The polypeptide is 3-methyl-2-oxobutanoate hydroxymethyltransferase (Aeropyrum pernix (strain ATCC 700893 / DSM 11879 / JCM 9820 / NBRC 100138 / K1)).